The primary structure comprises 271 residues: tRNA (guanine-N(1)-)-methyltransferase (271 aa).

S-adenosyl-L-methionine-binding positions include glycine 120 and 145-150 (IGDYVL).

Belongs to the RNA methyltransferase TrmD family. As to quaternary structure, homodimer.

The protein resides in the cytoplasm. The enzyme catalyses guanosine(37) in tRNA + S-adenosyl-L-methionine = N(1)-methylguanosine(37) in tRNA + S-adenosyl-L-homocysteine + H(+). Specifically methylates guanosine-37 in various tRNAs. The chain is tRNA (guanine-N(1)-)-methyltransferase from Bifidobacterium longum (strain NCC 2705).